The chain runs to 116 residues: Iron-sulfur cluster insertion protein ErpA (116 aa).

The iron-sulfur cluster site is built by cysteine 44, cysteine 108, and cysteine 110.

Belongs to the HesB/IscA family. Homodimer. Iron-sulfur cluster serves as cofactor.

In terms of biological role, required for insertion of 4Fe-4S clusters for at least IspG. The protein is Iron-sulfur cluster insertion protein ErpA of Shewanella pealeana (strain ATCC 700345 / ANG-SQ1).